Consider the following 56-residue polypeptide: Large ribosomal subunit protein bL32 (56 aa).

A disordered region spans residues 1–26 (MAVQKSKVTRSRRGQRRSHDALTAAA). Residues 7 to 16 (KVTRSRRGQR) show a composition bias toward basic residues.

It belongs to the bacterial ribosomal protein bL32 family.

This Moritella marina (Vibrio marinus) protein is Large ribosomal subunit protein bL32 (rpmF).